A 591-amino-acid polypeptide reads, in one-letter code: L-fucose isomerase (591 aa).

Active-site proton acceptor residues include Glu337 and Asp361. Residues Glu337, Asp361, and His528 each coordinate Mn(2+).

The protein belongs to the L-fucose isomerase family. Homohexamer. Mn(2+) is required as a cofactor.

The protein localises to the cytoplasm. The enzyme catalyses L-fucose = L-fuculose. It participates in carbohydrate degradation; L-fucose degradation; L-lactaldehyde and glycerone phosphate from L-fucose: step 1/3. Converts the aldose L-fucose into the corresponding ketose L-fuculose. This Escherichia coli (strain ATCC 8739 / DSM 1576 / NBRC 3972 / NCIMB 8545 / WDCM 00012 / Crooks) protein is L-fucose isomerase.